A 233-amino-acid polypeptide reads, in one-letter code: Lipoprotein-releasing system ATP-binding protein LolD (233 aa).

Residues 6-233 (LQCDNLCKRY…TAELSLMGAE (228 aa)) enclose the ABC transporter domain. Residue 42-49 (GSSGSGKS) participates in ATP binding.

This sequence belongs to the ABC transporter superfamily. Lipoprotein translocase (TC 3.A.1.125) family. As to quaternary structure, the complex is composed of two ATP-binding proteins (LolD) and two transmembrane proteins (LolC and LolE).

It localises to the cell inner membrane. Its function is as follows. Part of the ABC transporter complex LolCDE involved in the translocation of mature outer membrane-directed lipoproteins, from the inner membrane to the periplasmic chaperone, LolA. Responsible for the formation of the LolA-lipoprotein complex in an ATP-dependent manner. The chain is Lipoprotein-releasing system ATP-binding protein LolD from Shigella dysenteriae serotype 1 (strain Sd197).